Here is a 31-residue protein sequence, read N- to C-terminus: Cycloviolacin-O6 (31 aa).

Positions 1–31 (GTLPCGESCVWIPCISAAVGCSCKSKVCYKN) form a cross-link, cyclopeptide (Gly-Asn). Intrachain disulfides connect Cys5/Cys21, Cys9/Cys23, and Cys14/Cys28.

Post-translationally, this is a cyclic peptide.

In terms of biological role, probably participates in a plant defense mechanism. This is Cycloviolacin-O6 from Viola odorata (Sweet violet).